We begin with the raw amino-acid sequence, 469 residues long: Ectonucleoside triphosphate diphosphohydrolase 5 (469 aa).

Residues 1 to 24 form the signal peptide; sequence MATPWGAVFFLLMIACAGSTVFYR. Catalysis depends on Glu172, which acts as the Proton acceptor. Residue Asn232 is glycosylated (N-linked (GlcNAc...) asparagine). 2 disulfides stabilise this stretch: Cys272/Cys303 and Cys363/Cys377.

The protein belongs to the GDA1/CD39 NTPase family. As to quaternary structure, monomer; active form. Homodimer; disulfide-linked. Homodimers are enzymatically inactive. The cofactor is Ca(2+). Mg(2+) serves as cofactor. In terms of processing, N-glycosylated; high-mannose type. Expressed in fetal cells and most adult tissues.

The protein resides in the endoplasmic reticulum. It localises to the secreted. It catalyses the reaction a ribonucleoside 5'-diphosphate + H2O = a ribonucleoside 5'-phosphate + phosphate + H(+). It carries out the reaction GDP + H2O = GMP + phosphate + H(+). The catalysed reaction is UDP + H2O = UMP + phosphate + H(+). The enzyme catalyses IDP + H2O = IMP + phosphate + H(+). It catalyses the reaction CDP + H2O = CMP + phosphate + H(+). It carries out the reaction ADP + H2O = AMP + phosphate + H(+). It participates in protein modification; protein glycosylation. In terms of biological role, hydrolyzes nucleoside diphosphates with a preference for GDP, IDP and UDP compared to ADP and CDP. In the lumen of the endoplasmic reticulum, hydrolyzes UDP that acts as an end-product feedback inhibitor of the UDP-Glc:glycoprotein glucosyltransferases. UMP can be transported back by an UDP-sugar antiporter to the cytosol where it is consumed to regenerate UDP-glucose. Therefore, it positively regulates protein reglucosylation by clearing UDP from the ER lumen and by promoting the regeneration of UDP-glucose. Protein reglucosylation is essential to proper glycoprotein folding and quality control in the ER. This chain is Ectonucleoside triphosphate diphosphohydrolase 5 (ENTPD5), found in Mesocricetus auratus (Golden hamster).